Reading from the N-terminus, the 622-residue chain is Matrilin-4 (622 aa).

The signal sequence occupies residues 1 to 18 (MRGLLCWPVLLLLLQPWE). One can recognise a VWFA 1 domain in the interval 34-213 (DLVFVIDSSR…EFGLQFQSRL (180 aa)). An N-linked (GlcNAc...) asparagine glycan is attached at Asn69. An EGF-like 1; incomplete domain is found at 215–255 (GKDQCAEGGHGCQHQCVNAWAMFHCTCNPGYKLAADNKSCL). Intrachain disulfides connect Cys219/Cys230, Cys226/Cys239, Cys241/Cys254, Cys260/Cys271, Cys267/Cys280, Cys282/Cys295, Cys301/Cys312, Cys308/Cys321, Cys323/Cys336, Cys342/Cys353, Cys349/Cys362, and Cys364/Cys377. A glycan (N-linked (GlcNAc...) asparagine) is linked at Asn251. 3 EGF-like domains span residues 256–292 (AIDL…QQDQ), 297–337 (AIDY…RSCQ), and 342–377 (CNGV…GKSC). Asn305 carries N-linked (GlcNAc...) asparagine glycosylation. The VWFA 2 domain maps to 386 to 561 (DLVLLVDGSK…GTMTHLLENL (176 aa)). Residues 591–622 (GRTLGALESLTLNLAQLTARLEDLENQLANQK) adopt a coiled-coil conformation.

Interacts with COMP. As to expression, embryonic kidney, lung and placenta.

It localises to the secreted. Its function is as follows. Major component of the extracellular matrix of cartilage. The sequence is that of Matrilin-4 (MATN4) from Homo sapiens (Human).